The following is a 362-amino-acid chain: Porin Omp2b (362 aa).

An N-terminal signal peptide occupies residues 1-22; that stretch reads MNIKSLLLGSAAALVAASGAQA.

It belongs to the alphaproteobacteria porin family. As to quaternary structure, homotrimer.

Its subcellular location is the cell outer membrane. Forms passive diffusion pores that allow small molecular weight hydrophilic materials across the outer membrane. The sequence is that of Porin Omp2b (omp2b) from Brucella melitensis biotype 1 (strain ATCC 23456 / CCUG 17765 / NCTC 10094 / 16M).